A 62-amino-acid polypeptide reads, in one-letter code: Small ribosomal subunit protein bS21 (62 aa).

It belongs to the bacterial ribosomal protein bS21 family.

The protein is Small ribosomal subunit protein bS21 (rpsU) of Mycoplasma genitalium (strain ATCC 33530 / DSM 19775 / NCTC 10195 / G37) (Mycoplasmoides genitalium).